Here is a 930-residue protein sequence, read N- to C-terminus: Isoleucine--tRNA ligase (930 aa).

The 'HIGH' region motif lies at 57-67; that stretch reads PYANGHLHLGH. Position 555 (glutamate 555) interacts with L-isoleucyl-5'-AMP. The short motif at 596 to 600 is the 'KMSKS' region element; it reads KMSKS. Position 599 (lysine 599) interacts with ATP. Positions 896, 899, 916, and 919 each coordinate Zn(2+).

Belongs to the class-I aminoacyl-tRNA synthetase family. IleS type 1 subfamily. As to quaternary structure, monomer. It depends on Zn(2+) as a cofactor.

Its subcellular location is the cytoplasm. The enzyme catalyses tRNA(Ile) + L-isoleucine + ATP = L-isoleucyl-tRNA(Ile) + AMP + diphosphate. Functionally, catalyzes the attachment of isoleucine to tRNA(Ile). As IleRS can inadvertently accommodate and process structurally similar amino acids such as valine, to avoid such errors it has two additional distinct tRNA(Ile)-dependent editing activities. One activity is designated as 'pretransfer' editing and involves the hydrolysis of activated Val-AMP. The other activity is designated 'posttransfer' editing and involves deacylation of mischarged Val-tRNA(Ile). This Moorella thermoacetica (strain ATCC 39073 / JCM 9320) protein is Isoleucine--tRNA ligase.